A 251-amino-acid polypeptide reads, in one-letter code: Tritrans,polycis-undecaprenyl-diphosphate synthase (geranylgeranyl-diphosphate specific) (251 aa).

The active site involves aspartate 29. A Mg(2+)-binding site is contributed by aspartate 29. Substrate-binding positions include glycine 30–arginine 33, phenylalanine 34, histidine 46, and serine 74–glutamate 76. The Proton acceptor role is filled by asparagine 77. Substrate is bound by residues phenylalanine 78, arginine 80, arginine 200, and arginine 206–serine 208.

Belongs to the UPP synthase family. Homodimer. Requires Mg(2+) as cofactor.

The enzyme catalyses geranylgeranyl diphosphate + 7 isopentenyl diphosphate = tri-trans,hepta-cis-undecaprenyl diphosphate + 7 diphosphate. Functionally, catalyzes the sequential condensation of isopentenyl diphosphate (IPP) with geranylgeranyl diphosphate (GGPP) to yield (2Z,6Z,10Z,14Z,18Z,22Z,26Z,30E,34E,38E)-undecaprenyl diphosphate (tritrans,heptacis-UPP). It is probably the precursor of glycosyl carrier lipids. This is Tritrans,polycis-undecaprenyl-diphosphate synthase (geranylgeranyl-diphosphate specific) from Archaeoglobus fulgidus (strain ATCC 49558 / DSM 4304 / JCM 9628 / NBRC 100126 / VC-16).